Reading from the N-terminus, the 138-residue chain is Putative membrane protein insertion efficiency factor (138 aa).

The segment at 71-138 (YDPVPGTPEA…GTPSHTRGEN (68 aa)) is disordered. Residues 81 to 113 (RQWRELHPETARSKNEPIHDLTDDNPRDHEPAL) are compositionally biased toward basic and acidic residues. The span at 123–138 (PGSTHTGTPSHTRGEN) shows a compositional bias: polar residues.

The protein belongs to the UPF0161 family.

The protein resides in the cell membrane. In terms of biological role, could be involved in insertion of integral membrane proteins into the membrane. In Cutibacterium acnes (strain DSM 16379 / KPA171202) (Propionibacterium acnes), this protein is Putative membrane protein insertion efficiency factor.